A 566-amino-acid polypeptide reads, in one-letter code: NAD-dependent malic enzyme 3 (566 aa).

The active-site Proton donor is tyrosine 105. The Proton acceptor role is filled by lysine 178. A divalent metal cation-binding residues include glutamate 249, aspartate 250, and aspartate 273. NAD(+)-binding positions include 306 to 309 (AGTA), asparagine 423, and asparagine 468.

Belongs to the malic enzymes family. It depends on Mg(2+) as a cofactor. The cofactor is Mn(2+).

It carries out the reaction (S)-malate + NAD(+) = pyruvate + CO2 + NADH. The enzyme catalyses oxaloacetate + H(+) = pyruvate + CO2. Functionally, catalyzes the decarboxylation of malate to pyruvate. Can use NAD and NADP, but with a strong preference for NAD. Can also catalyze the decarboxylation of oxaloacetate. Involved in keeping the ATP levels high. This Bacillus subtilis (strain 168) protein is NAD-dependent malic enzyme 3 (malS).